The chain runs to 447 residues: DNA primase DnaG (447 aa).

Residues 200–274 form the Toprim domain; sequence DSIIVVEGRA…DIDYVARAPE (75 aa). Residues Glu206, Asp248, and Asp250 each coordinate Mg(2+).

This sequence belongs to the archaeal DnaG primase family. Forms a ternary complex with MCM helicase and DNA. Component of the archaeal exosome complex. Mg(2+) is required as a cofactor.

The enzyme catalyses ssDNA + n NTP = ssDNA/pppN(pN)n-1 hybrid + (n-1) diphosphate.. In terms of biological role, RNA polymerase that catalyzes the synthesis of short RNA molecules used as primers for DNA polymerase during DNA replication. Also part of the exosome, which is a complex involved in RNA degradation. Acts as a poly(A)-binding protein that enhances the interaction between heteromeric, adenine-rich transcripts and the exosome. The protein is DNA primase DnaG of Pyrococcus horikoshii (strain ATCC 700860 / DSM 12428 / JCM 9974 / NBRC 100139 / OT-3).